The sequence spans 468 residues: Glutamate--tRNA ligase (468 aa).

Residues 10 to 20 (PSPTGDLHIGG) carry the 'HIGH' region motif. Residues Cys-99, Cys-101, Cys-126, and Asp-128 each contribute to the Zn(2+) site. Positions 236 to 240 (RLSKR) match the 'KMSKS' region motif. Lys-239 contributes to the ATP binding site.

This sequence belongs to the class-I aminoacyl-tRNA synthetase family. Glutamate--tRNA ligase type 1 subfamily. As to quaternary structure, monomer. Requires Zn(2+) as cofactor.

It is found in the cytoplasm. The catalysed reaction is tRNA(Glu) + L-glutamate + ATP = L-glutamyl-tRNA(Glu) + AMP + diphosphate. Catalyzes the attachment of glutamate to tRNA(Glu) in a two-step reaction: glutamate is first activated by ATP to form Glu-AMP and then transferred to the acceptor end of tRNA(Glu). The chain is Glutamate--tRNA ligase from Syntrophobacter fumaroxidans (strain DSM 10017 / MPOB).